Here is a 447-residue protein sequence, read N- to C-terminus: Phosphoglucosamine mutase (447 aa).

S100 serves as the catalytic Phosphoserine intermediate. Mg(2+) contacts are provided by S100, D239, D241, and D243. S100 carries the phosphoserine modification.

This sequence belongs to the phosphohexose mutase family. Mg(2+) serves as cofactor. Post-translationally, activated by phosphorylation.

The enzyme catalyses alpha-D-glucosamine 1-phosphate = D-glucosamine 6-phosphate. Functionally, catalyzes the conversion of glucosamine-6-phosphate to glucosamine-1-phosphate. This Thermoanaerobacter pseudethanolicus (strain ATCC 33223 / 39E) (Clostridium thermohydrosulfuricum) protein is Phosphoglucosamine mutase.